Reading from the N-terminus, the 386-residue chain is Chorismate synthase (386 aa).

The disordered stretch occupies residues 32 to 60 (LPLSEDDVQRELDRRRPGQSGVSTPRSER). The segment covering 38–47 (DVQRELDRRR) has biased composition (basic and acidic residues). Arginine 46 contributes to the NADP(+) binding site. FMN contacts are provided by residues 123 to 125 (RAS), glycine 290, 305 to 309 (KPTPS), and arginine 332.

It belongs to the chorismate synthase family. Requires FMNH2 as cofactor.

It carries out the reaction 5-O-(1-carboxyvinyl)-3-phosphoshikimate = chorismate + phosphate. It participates in metabolic intermediate biosynthesis; chorismate biosynthesis; chorismate from D-erythrose 4-phosphate and phosphoenolpyruvate: step 7/7. Functionally, catalyzes the anti-1,4-elimination of the C-3 phosphate and the C-6 proR hydrogen from 5-enolpyruvylshikimate-3-phosphate (EPSP) to yield chorismate, which is the branch point compound that serves as the starting substrate for the three terminal pathways of aromatic amino acid biosynthesis. This reaction introduces a second double bond into the aromatic ring system. The chain is Chorismate synthase from Methanopyrus kandleri (strain AV19 / DSM 6324 / JCM 9639 / NBRC 100938).